We begin with the raw amino-acid sequence, 178 residues long: Hypoxanthine phosphoribosyltransferase (178 aa).

Diphosphate is bound by residues Arg-43 and Gly-44. Residue Glu-99 participates in GMP binding. Glu-99 contributes to the IMP binding site. Positions 99 and 100 each coordinate Mg(2+). Asp-103 acts as the Proton acceptor in catalysis. Residues 103 to 108 (DSGNTL), Lys-131, and Asp-159 each bind GMP. IMP-binding positions include 103–108 (DSGNTL) and Lys-131. A diphosphate-binding site is contributed by Arg-165.

The protein belongs to the purine/pyrimidine phosphoribosyltransferase family. Homotetramer. The cofactor is Mg(2+).

The protein localises to the cytoplasm. It catalyses the reaction IMP + diphosphate = hypoxanthine + 5-phospho-alpha-D-ribose 1-diphosphate. It carries out the reaction GMP + diphosphate = guanine + 5-phospho-alpha-D-ribose 1-diphosphate. The protein operates within purine metabolism; IMP biosynthesis via salvage pathway; IMP from hypoxanthine: step 1/1. In terms of biological role, purine salvage pathway enzyme which catalyzes the transfer of the ribosyl-5-phosphate group from 5-phospho-alpha-D-ribose 1-diphosphate (PRPP) to the N9 position of hypoxanthine to yield IMP (inosine 5'-monophosphate). To a lesser extent, can also act on guanine leading to GMP, but shows a highly less efficient activity with xanthine. The sequence is that of Hypoxanthine phosphoribosyltransferase (hpt) from Salmonella typhimurium (strain LT2 / SGSC1412 / ATCC 700720).